A 401-amino-acid polypeptide reads, in one-letter code: Argininosuccinate synthase (401 aa).

Position 8–16 (8–16) interacts with ATP; the sequence is AYSGGLDTS. Residue Tyr-87 participates in L-citrulline binding. Gly-117 is an ATP binding site. Residues Thr-119, Asn-123, and Asp-124 each coordinate L-aspartate. L-citrulline is bound at residue Asn-123. Arg-127, Ser-175, Glu-259, and Tyr-271 together coordinate L-citrulline.

Belongs to the argininosuccinate synthase family. Type 1 subfamily. In terms of assembly, homotetramer.

It is found in the cytoplasm. The catalysed reaction is L-citrulline + L-aspartate + ATP = 2-(N(omega)-L-arginino)succinate + AMP + diphosphate + H(+). It participates in amino-acid biosynthesis; L-arginine biosynthesis; L-arginine from L-ornithine and carbamoyl phosphate: step 2/3. This is Argininosuccinate synthase from Corynebacterium efficiens (strain DSM 44549 / YS-314 / AJ 12310 / JCM 11189 / NBRC 100395).